The following is a 607-amino-acid chain: tRNA uridine 5-carboxymethylaminomethyl modification enzyme MnmG (607 aa).

Residues G11–G16, V123, and S178 contribute to the FAD site. G270–F284 lines the NAD(+) pocket. An FAD-binding site is contributed by Q367.

This sequence belongs to the MnmG family. As to quaternary structure, homodimer. Heterotetramer of two MnmE and two MnmG subunits. The cofactor is FAD.

The protein localises to the cytoplasm. In terms of biological role, NAD-binding protein involved in the addition of a carboxymethylaminomethyl (cmnm) group at the wobble position (U34) of certain tRNAs, forming tRNA-cmnm(5)s(2)U34. The polypeptide is tRNA uridine 5-carboxymethylaminomethyl modification enzyme MnmG (Metamycoplasma arthritidis (strain 158L3-1) (Mycoplasma arthritidis)).